We begin with the raw amino-acid sequence, 131 residues long: Arsenate reductase (131 aa).

Active-site nucleophile residues include Cys10, Cys82, and Cys89. Cystine bridges form between Cys10-Cys82 and Cys82-Cys89.

Belongs to the low molecular weight phosphotyrosine protein phosphatase family. Thioredoxin-coupled ArsC subfamily.

Its subcellular location is the cytoplasm. It carries out the reaction arsenate + [thioredoxin]-dithiol + H(+) = arsenite + [thioredoxin]-disulfide + H2O. Its function is as follows. Catalyzes the reduction of arsenate [As(V)] to arsenite [As(III)]. The chain is Arsenate reductase from Staphylococcus aureus (strain N315).